The primary structure comprises 428 residues: Chaperone SurA (428 aa).

The first 20 residues, M1–A20, serve as a signal peptide directing secretion. PpiC domains follow at residues S171 to D272 and V282 to D382.

Its subcellular location is the periplasm. It carries out the reaction [protein]-peptidylproline (omega=180) = [protein]-peptidylproline (omega=0). Chaperone involved in the correct folding and assembly of outer membrane proteins. Recognizes specific patterns of aromatic residues and the orientation of their side chains, which are found more frequently in integral outer membrane proteins. May act in both early periplasmic and late outer membrane-associated steps of protein maturation. The sequence is that of Chaperone SurA from Salmonella paratyphi A (strain ATCC 9150 / SARB42).